A 270-amino-acid polypeptide reads, in one-letter code: Protein-ADP-ribose hydrolase (270 aa).

The 195-residue stretch at 73 to 267 (VSVKDCQKTN…LYDTYLQKEN (195 aa)) folds into the Macro domain. 3 residues coordinate ADP-D-ribose: aspartate 92, isoleucine 93, and asparagine 106. Cysteine 112, histidine 117, and cysteine 119 together coordinate Zn(2+). Cysteine 119, isoleucine 120, aspartate 121, serine 212, threonine 213, glycine 214, glutamate 215, and phenylalanine 216 together coordinate ADP-D-ribose.

Belongs to the MacroD-type family. Zn-Macro subfamily. The cofactor is Zn(2+).

The catalysed reaction is 4-O-(ADP-D-ribosyl)-L-aspartyl-[protein] + H2O = L-aspartyl-[protein] + ADP-D-ribose + H(+). ADP-ribosylhydrolase that specifically reverses the SirTM-mediated mono-ADP-ribosylation at an asparatate residue of GcvH-L, by releasing ADP-ribose from the target protein. May play a role in the regulation of the response to host-induced oxidative stress. The polypeptide is Protein-ADP-ribose hydrolase (Streptococcus pyogenes serotype M1).